The following is a 368-amino-acid chain: tRNA-specific 2-thiouridylase MnmA (368 aa).

Residues 6-13 (ALSGGVDS) and Met32 each bind ATP. The Nucleophile role is filled by Cys92. Residues Cys92 and Cys186 are joined by a disulfide bond. Position 116 (Gly116) interacts with ATP. The interval 134 to 136 (KDQ) is interaction with tRNA. Cys186 (cysteine persulfide intermediate) is an active-site residue. Residues 292–293 (RY) form an interaction with tRNA region.

Belongs to the MnmA/TRMU family.

The protein resides in the cytoplasm. The enzyme catalyses S-sulfanyl-L-cysteinyl-[protein] + uridine(34) in tRNA + AH2 + ATP = 2-thiouridine(34) in tRNA + L-cysteinyl-[protein] + A + AMP + diphosphate + H(+). Functionally, catalyzes the 2-thiolation of uridine at the wobble position (U34) of tRNA, leading to the formation of s(2)U34. In Campylobacter hominis (strain ATCC BAA-381 / DSM 21671 / CCUG 45161 / LMG 19568 / NCTC 13146 / CH001A), this protein is tRNA-specific 2-thiouridylase MnmA.